The following is a 735-amino-acid chain: Rho GTPase-activating protein SYDE1 (735 aa).

The disordered stretch occupies residues 1–253; it reads MAEPLLRKTF…SPTSFRPYEV (253 aa). Residues 14 to 31 show a composition bias toward basic and acidic residues; it reads RGREKLPRKKSDAKERGH. A compositionally biased stretch (pro residues) spans 35 to 46; the sequence is RPEPSPPEPEPQ. The segment covering 47–71 has biased composition (low complexity); that stretch reads APEGSQAGAEGPSSPEASRSPARGA. Residues 122–131 show a composition bias toward pro residues; the sequence is PPAPEPPGPQ. Positions 211–221 are enriched in gly residues; that stretch reads GGPGPAAGPGG. Phosphoserine occurs at positions 224, 231, 235, and 244. Positions 249 to 366 constitute a C2 domain; that stretch reads RPYEVGPAAR…FRGCQAQQLA (118 aa). One can recognise a Rho-GAP domain in the interval 398–604; it reads LPLPLLVERE…YLLQSWPDPR (207 aa). Position 575 is a phosphoserine (S575). Disordered stretches follow at residues 608–651 and 674–696; these read QSPD…SNRY and DYDH…PRVT. 2 positions are modified to phosphoserine: S681 and S683.

Palmitoylated. Probably palmitoylated by ZDHHC3 and ZDHHC7. Expressed in trophoblast cells of placental villi.

In terms of biological role, GTPase activator for the Rho-type GTPases. As a GCM1 downstream effector, it is involved in placental development and positively regulates trophoblast cells migration. It regulates cytoskeletal remodeling by controlling the activity of Rho GTPases including RHOA, CDC42 and RAC1. This Homo sapiens (Human) protein is Rho GTPase-activating protein SYDE1 (SYDE1).